The chain runs to 169 residues: UPF0303 protein BCAN_A1444 (169 aa).

The protein belongs to the UPF0303 family.

The chain is UPF0303 protein BCAN_A1444 from Brucella canis (strain ATCC 23365 / NCTC 10854 / RM-666).